We begin with the raw amino-acid sequence, 69 residues long: uncharacterized protein (69 aa).

This is an uncharacterized protein from Escherichia coli O6:H1 (strain CFT073 / ATCC 700928 / UPEC).